The following is a 119-amino-acid chain: Large ribosomal subunit protein bL20 (119 aa).

It belongs to the bacterial ribosomal protein bL20 family.

Binds directly to 23S ribosomal RNA and is necessary for the in vitro assembly process of the 50S ribosomal subunit. It is not involved in the protein synthesizing functions of that subunit. The chain is Large ribosomal subunit protein bL20 from Dehalococcoides mccartyi (strain ATCC BAA-2100 / JCM 16839 / KCTC 5957 / BAV1).